A 573-amino-acid chain; its full sequence is Sulfite reductase [NADPH] hemoprotein beta-component (573 aa).

Residues Cys-438, Cys-444, Cys-483, and Cys-487 each coordinate [4Fe-4S] cluster. Cys-487 provides a ligand contact to siroheme.

Belongs to the nitrite and sulfite reductase 4Fe-4S domain family. In terms of assembly, alpha(8)-beta(8). The alpha component is a flavoprotein, the beta component is a hemoprotein. It depends on siroheme as a cofactor. Requires [4Fe-4S] cluster as cofactor.

It catalyses the reaction hydrogen sulfide + 3 NADP(+) + 3 H2O = sulfite + 3 NADPH + 4 H(+). Its pathway is sulfur metabolism; hydrogen sulfide biosynthesis; hydrogen sulfide from sulfite (NADPH route): step 1/1. Its function is as follows. Component of the sulfite reductase complex that catalyzes the 6-electron reduction of sulfite to sulfide. This is one of several activities required for the biosynthesis of L-cysteine from sulfate. The sequence is that of Sulfite reductase [NADPH] hemoprotein beta-component from Nitrosomonas europaea (strain ATCC 19718 / CIP 103999 / KCTC 2705 / NBRC 14298).